The following is a 299-amino-acid chain: Non-structural protein V (299 aa).

The disordered stretch occupies residues 40–94 (SDNPGQDRATCKEEEAGSSGLSKPCLSAIGSTEGGAPRIRGQGSGESDDDAETLG). Residues 110-120 (YHVYDHSGEAV) form an interaction with host STAT1 region. Positions 133-143 (SGLDGDSTLSG) are enriched in low complexity. Disordered stretches follow at residues 133 to 168 (SGLDGDSTLSGGDDESENSDVDIGEPDTEGYAITDR) and 204 to 229 (PKLGKTLNVPPPPNPSRASTSETPIK). Acidic residues predominate over residues 144-160 (GDDESENSDVDIGEPDT). Residues histidine 232, cysteine 251, cysteine 255, cysteine 267, cysteine 269, cysteine 272, cysteine 276, and cysteine 279 each coordinate Zn(2+).

It belongs to the paramyxoviruses V protein family. In terms of assembly, interacts with host IFIH1/MDA5 and DHX58/LGP2; these interactions are involved in the inhibition of the host type I interferon signaling pathway. Interacts with host TYK2; this interaction inhibits the type I interferon signaling pathway without affecting the type II pathway. Interacts with host IRF7; this interaction inhibits IRF7 translocation to the nucleus. Interacts with host CHUK. Interacts with host RELA/p65; this interaction inhibits the nuclear translocation of NF-KappaB. Interacts (via N-terminus) with host STAT1 and JAK1; these interactions inhibit STAT1 phosphorylation by Jak1 and thereby the type I interferon signaling pathway. Interacts (via C-terminus) with host STAT2; this interaction is involved in the inhibition of the host type I interferon signaling pathway. Forms a complex with host PPP1CA and PPP1CC; this interaction prevents dephosphorylation of host IFIH1/MDA5 and leads to the inhibition of the host type I interferon signaling pathway. Interacts with host IRF9; this interaction prevents the binding of IRF9 to STAT2 and thereby the type I interferon signaling pathway. Interacts with host RIGI regulatory protein (via CARDs domain) and host TRIM25 (via SPRY domain); these interactions prevent TRIM25-mediated ubiquitination of RIG-I and disrupts downstream RIG-I signaling.

It localises to the host cytoplasm. Functionally, plays an essential role in the inhibition of host immune response. Prevents the establishment of cellular antiviral state by blocking interferon-alpha/beta (IFN-alpha/beta) production and signaling pathway. Interacts with host IFIH1/MDA5 and DHX58/LGP2 to inhibit the transduction pathway involved in the activation of IFN-beta promoter, thus protecting the virus against cell antiviral state. Blocks the type I interferon signaling pathway by interacting with host TYK2 and thereby inhibiting downstream STAT1 and STAT2 phosphorylation. Blocks the type I interferon signaling pathway by disrupting the RIG-I signaling pathway. Moderately affects the type II interferon signaling. Prevents PP1alpha/gamma-mediated dephosphorylation of host IFIH1/MDA5 and thus blocks its activation. This chain is Non-structural protein V (P/V), found in Homo sapiens (Human).